The following is a 601-amino-acid chain: Probable protein arginine N-methyltransferase 3 (601 aa).

A compositionally biased stretch (basic and acidic residues) spans 1-10; sequence MAATMVKHEI. A disordered region spans residues 1–50; that stretch reads MAATMVKHEILNYSEDEEENYSDEGDWGDWKADDNGIEGGEEEEEDDGDD. Acidic residues-rich tracts occupy residues 14 to 27 and 35 to 50; these read SEDEEENYSDEGDW and NGIEGGEEEEEDDGDD. The segment at 57-78 adopts a C2H2-type zinc-finger fold; sequence CLFCDSHFVSCDLLFEHCRLSH. The SAM-dependent MTase PRMT-type domain occupies 242-554; the sequence is NENYFGSYSS…NDRREAIGTE (313 aa). S-adenosyl-L-homocysteine is bound by residues arginine 264, glycine 288, glutamate 310, serine 312, valine 345, and glutamate 346. Residues glutamate 365 and glutamate 374 contribute to the active site.

This sequence belongs to the class I-like SAM-binding methyltransferase superfamily. Protein arginine N-methyltransferase family.

Its subcellular location is the cytoplasm. The protein localises to the cytosol. The enzyme catalyses L-arginyl-[protein] + S-adenosyl-L-methionine = N(omega)-methyl-L-arginyl-[protein] + S-adenosyl-L-homocysteine + H(+). It catalyses the reaction L-arginyl-[protein] + 2 S-adenosyl-L-methionine = N(omega),N(omega)-dimethyl-L-arginyl-[protein] + 2 S-adenosyl-L-homocysteine + 2 H(+). Protein-arginine N-methyltransferase that catalyzes both the monomethylation and asymmetric dimethylation of the guanidino nitrogens of arginine residues in target proteins, and therefore falls into the group of type I methyltransferases. This Arabidopsis thaliana (Mouse-ear cress) protein is Probable protein arginine N-methyltransferase 3 (PRMT3).